We begin with the raw amino-acid sequence, 315 residues long: Probable cell division protein WhiA (315 aa).

A DNA-binding region (H-T-H motif) is located at residues 280 to 313 (SLKELGDLLDPPLSKSGVAYRMRKLEESVKEILQ).

The protein belongs to the WhiA family.

Its function is as follows. Involved in cell division and chromosome segregation. This Syntrophomonas wolfei subsp. wolfei (strain DSM 2245B / Goettingen) protein is Probable cell division protein WhiA.